The chain runs to 138 residues: Histone H3 (138 aa).

Residues 1-49 form a disordered region; that stretch reads MARTKQTARKSTGGKAPRKQLATKAARKQAPSQVSGGVKKPHRYRPGTV. Lys-5 bears the N6,N6,N6-trimethyllysine; alternate mark. Lys-5 bears the N6,N6-dimethyllysine; alternate mark. N6-methyllysine; alternate is present on residues Lys-5 and Lys-10. At Lys-10 the chain carries N6-acetyllysine; alternate. Ser-11 carries the phosphoserine modification. Lys-15 carries the post-translational modification N6,N6-dimethyllysine; alternate. N6-methyllysine; alternate occurs at positions 15, 19, 24, 28, and 39. Lys-15, Lys-19, Lys-24, Lys-28, and Lys-39 each carry N6-acetyllysine; alternate. N6,N6,N6-trimethyllysine; alternate occurs at positions 28 and 39. N6,N6-dimethyllysine; alternate occurs at positions 28 and 39. 2 positions are modified to N6-acetyllysine: Lys-59 and Lys-67. Lys-82 carries the N6,N6,N6-trimethyllysine; alternate modification. Lys-82 is subject to N6,N6-dimethyllysine; alternate. Position 82 is an N6-methyllysine; alternate (Lys-82).

This sequence belongs to the histone H3 family. In terms of assembly, the nucleosome is a histone octamer containing two molecules each of H2A, H2B, H3 and H4 assembled in one H3-H4 heterotetramer and two H2A-H2B heterodimers. The octamer wraps approximately 147 bp of DNA. Phosphorylated to form H3S10ph. H3S10ph promotes subsequent H3K14ac formation and is required for transcriptional activation through TBP recruitment to the promoters. Post-translationally, mono-, di- and trimethylated by the COMPASS complex to form H3K4me1/2/3. H3K4me activates gene expression by regulating transcription elongation and plays a role in telomere length maintenance. H3K4me enrichment correlates with transcription levels, and occurs in a 5' to 3' gradient with H3K4me3 enrichment at the 5'-end of genes, shifting to H3K4me2 and then H3K4me1. Methylated by SET2 to form H3K36me. H3K36me represses gene expression. Methylated by DOT1 to form H3K79me. H3K79me is required for association of SIR proteins with telomeric regions and for telomeric silencing. The COMPASS-mediated formation of H3K4me2/3 and the DOT1-mediated formation of H3K79me require H2BK123ub1. In terms of processing, acetylation of histone H3 leads to transcriptional activation. H3K14ac formation by GCN5 is promoted by H3S10ph. H3K14ac can also be formed by ESA1. H3K56ac formation occurs predominantly in newly synthesized H3 molecules during G1, S and G2/M of the cell cycle and may be involved in DNA repair.

It localises to the nucleus. The protein resides in the chromosome. Its function is as follows. Core component of nucleosome. Nucleosomes wrap and compact DNA into chromatin, limiting DNA accessibility to the cellular machineries which require DNA as a template. Histones thereby play a central role in transcription regulation, DNA repair, DNA replication and chromosomal stability. DNA accessibility is regulated via a complex set of post-translational modifications of histones, also called histone code, and nucleosome remodeling. This chain is Histone H3 (HHT1), found in Cryptococcus neoformans var. neoformans serotype D (strain B-3501A) (Filobasidiella neoformans).